The chain runs to 433 residues: Pyrimidine-nucleoside phosphorylase (433 aa).

Residue 81 to 83 (KHS) coordinates phosphate. Positions 88 and 90 each coordinate K(+). Phosphate contacts are provided by residues Thr-92, 108-110 (KMS), and Thr-120. 2 residues coordinate substrate: Arg-168 and Lys-187. 3 residues coordinate K(+): Leu-243, Ala-246, and Glu-255.

It belongs to the thymidine/pyrimidine-nucleoside phosphorylase family. Homodimer. K(+) is required as a cofactor.

It carries out the reaction uridine + phosphate = alpha-D-ribose 1-phosphate + uracil. The catalysed reaction is thymidine + phosphate = 2-deoxy-alpha-D-ribose 1-phosphate + thymine. The enzyme catalyses 2'-deoxyuridine + phosphate = 2-deoxy-alpha-D-ribose 1-phosphate + uracil. Catalyzes phosphorolysis of the pyrimidine nucleosides uridine, thymidine and 2'-deoxyuridine with the formation of the corresponding pyrimidine base and ribose-1-phosphate. The chain is Pyrimidine-nucleoside phosphorylase (pdp) from Staphylococcus aureus (strain bovine RF122 / ET3-1).